Here is a 1108-residue protein sequence, read N- to C-terminus: Probable arabinosyltransferase A (1108 aa).

13 consecutive transmembrane segments (helical) span residues 12–34, 204–223, 258–280, 334–356, 368–387, 397–414, 421–443, 463–482, 531–553, 582–604, 616–638, 653–675, and 696–718; these read IPRS…VPLL, IVMV…LAVL, VGLA…HVVG, VWMR…HWVL, ANRV…WLPF, IALG…AIAL, AVAV…AVAA, GLLA…LVVV, FAVL…RGHV, WAVQ…AFAC, TLYV…GWFY, IASH…LAAW, and VLAS…ASLT. Residues 804-825 are disordered; that stretch reads PGLVNSDASPNKPNVAYSDSAG.

Belongs to the emb family.

Its subcellular location is the cell membrane. Functionally, arabinosyl transferase responsible for the polymerization of arabinose into the arabinan of arabinogalactan. The sequence is that of Probable arabinosyltransferase A (embA) from Mycobacterium avium.